Consider the following 517-residue polypeptide: Glycerol kinase (517 aa).

Position 24 (threonine 24) interacts with ADP. 3 residues coordinate ATP: threonine 24, threonine 25, and serine 26. Threonine 24 is a sn-glycerol 3-phosphate binding site. Arginine 28 lines the ADP pocket. Arginine 94, glutamate 95, tyrosine 146, and aspartate 261 together coordinate sn-glycerol 3-phosphate. Arginine 94, glutamate 95, tyrosine 146, aspartate 261, and glutamine 262 together coordinate glycerol. Residues threonine 283 and glycine 327 each contribute to the ADP site. Residues threonine 283, glycine 327, glutamine 331, and glycine 428 each contribute to the ATP site. Positions 428 and 432 each coordinate ADP.

It belongs to the FGGY kinase family.

It carries out the reaction glycerol + ATP = sn-glycerol 3-phosphate + ADP + H(+). It functions in the pathway polyol metabolism; glycerol degradation via glycerol kinase pathway; sn-glycerol 3-phosphate from glycerol: step 1/1. With respect to regulation, inhibited by fructose 1,6-bisphosphate (FBP). Functionally, key enzyme in the regulation of glycerol uptake and metabolism. Catalyzes the phosphorylation of glycerol to yield sn-glycerol 3-phosphate. The protein is Glycerol kinase of Mycobacterium tuberculosis (strain ATCC 25177 / H37Ra).